The following is a 103-amino-acid chain: UPF0235 protein RHECIAT_CH0004196 (103 aa).

Belongs to the UPF0235 family.

This chain is UPF0235 protein RHECIAT_CH0004196, found in Rhizobium etli (strain CIAT 652).